The chain runs to 471 residues: Methylenetetrahydrofolate--tRNA-(uracil-5-)-methyltransferase TrmFO (471 aa).

Residue 9-14 coordinates FAD; the sequence is GGGLSG.

Belongs to the MnmG family. TrmFO subfamily. FAD is required as a cofactor.

It localises to the cytoplasm. The catalysed reaction is uridine(54) in tRNA + (6R)-5,10-methylene-5,6,7,8-tetrahydrofolate + NADH + H(+) = 5-methyluridine(54) in tRNA + (6S)-5,6,7,8-tetrahydrofolate + NAD(+). It carries out the reaction uridine(54) in tRNA + (6R)-5,10-methylene-5,6,7,8-tetrahydrofolate + NADPH + H(+) = 5-methyluridine(54) in tRNA + (6S)-5,6,7,8-tetrahydrofolate + NADP(+). In terms of biological role, catalyzes the folate-dependent formation of 5-methyl-uridine at position 54 (M-5-U54) in all tRNAs. The sequence is that of Methylenetetrahydrofolate--tRNA-(uracil-5-)-methyltransferase TrmFO from Beijerinckia indica subsp. indica (strain ATCC 9039 / DSM 1715 / NCIMB 8712).